Consider the following 452-residue polypeptide: Pre-mRNA-splicing factor prp46 (452 aa).

The span at 61–70 (AAKQAQAAAA) shows a compositional bias: low complexity. A disordered region spans residues 61–129 (AAKQAQAAAA…SATRQQPPEW (69 aa)). Residues 114–125 (SLIQRPSATRQQ) are compositionally biased toward polar residues. 7 WD repeats span residues 141 to 180 (GHLG…LRLT), 183 to 222 (GHIS…VIRH), 225 to 264 (GHLS…NIHV), 267 to 308 (GHTG…GVLT), 310 to 349 (HKKG…QNFE), 350 to 388 (GHNA…RYQT), and 399 to 438 (EAEA…TPET). The segment at 432 to 452 (DQATPETHPVTWAPTLGRQRY) is disordered.

It belongs to the WD repeat PRL1/PRL2 family. In terms of assembly, associated with the spliceosome.

The protein localises to the cytoplasm. Its subcellular location is the nucleus. Involved in pre-mRNA splicing and required for cell cycle progression at G2/M. In Emericella nidulans (strain FGSC A4 / ATCC 38163 / CBS 112.46 / NRRL 194 / M139) (Aspergillus nidulans), this protein is Pre-mRNA-splicing factor prp46 (prp46).